We begin with the raw amino-acid sequence, 239 residues long: tRNA (guanine-N(1)-)-methyltransferase (239 aa).

S-adenosyl-L-methionine-binding positions include G109 and I128–L133.

Belongs to the RNA methyltransferase TrmD family. Homodimer.

It localises to the cytoplasm. The enzyme catalyses guanosine(37) in tRNA + S-adenosyl-L-methionine = N(1)-methylguanosine(37) in tRNA + S-adenosyl-L-homocysteine + H(+). Functionally, specifically methylates guanosine-37 in various tRNAs. In Thermus thermophilus (strain ATCC BAA-163 / DSM 7039 / HB27), this protein is tRNA (guanine-N(1)-)-methyltransferase.